A 338-amino-acid polypeptide reads, in one-letter code: Photosystem II assembly lipoprotein Ycf48 (338 aa).

An N-terminal signal peptide occupies residues 1-23 (MKRLFSNVINLTLVLIVGVALSG). Cys24 carries N-palmitoyl cysteine lipidation. A lipid anchor (S-diacylglycerol cysteine) is attached at Cys24.

Belongs to the Ycf48 family. Part of early PSII assembly complexes which includes D1 (psbA) and PsbI; not found in mature PSII. Binds to the lumenal side of PSII complexes. Interacts with YidC.

The protein localises to the cellular thylakoid membrane. In terms of biological role, a factor required for optimal assembly of photosystem II (PSII), acting in the early stages of PSII assembly. Also plays a role in replacement of photodamaged D1 (psbA). Assists YidC in synthesis of chlorophyll-binding proteins. The chain is Photosystem II assembly lipoprotein Ycf48 from Prochlorococcus marinus (strain NATL2A).